Here is a 372-residue protein sequence, read N- to C-terminus: Chaperone protein DnaJ (372 aa).

A J domain is found at 5–69 (DYYEVLGVSK…DKRKQYDQFG (65 aa)). A CR-type zinc finger spans residues 139 to 221 (GVDKIIELDL…CKGKGKYLER (83 aa)). Residues Cys152, Cys155, Cys169, Cys172, Cys195, Cys198, Cys209, and Cys212 each contribute to the Zn(2+) site. 4 CXXCXGXG motif repeats span residues 152–159 (CSACFGSG), 169–176 (CNNCHGTG), 195–202 (CNVCNGAG), and 209–216 (CKNCKGKG).

The protein belongs to the DnaJ family. In terms of assembly, homodimer. The cofactor is Zn(2+).

It is found in the cytoplasm. Its function is as follows. Participates actively in the response to hyperosmotic and heat shock by preventing the aggregation of stress-denatured proteins and by disaggregating proteins, also in an autonomous, DnaK-independent fashion. Unfolded proteins bind initially to DnaJ; upon interaction with the DnaJ-bound protein, DnaK hydrolyzes its bound ATP, resulting in the formation of a stable complex. GrpE releases ADP from DnaK; ATP binding to DnaK triggers the release of the substrate protein, thus completing the reaction cycle. Several rounds of ATP-dependent interactions between DnaJ, DnaK and GrpE are required for fully efficient folding. Also involved, together with DnaK and GrpE, in the DNA replication of plasmids through activation of initiation proteins. This Mycoplasma capricolum subsp. capricolum (strain California kid / ATCC 27343 / NCTC 10154) protein is Chaperone protein DnaJ.